The following is a 3147-amino-acid chain: Probable polyketide synthase 1 (3147 aa).

Residues 12 to 457 form the Ketosynthase family 3 (KS3) domain; it reads SSDVAVIGVG…GSNCHLIIQE (446 aa). Catalysis depends on for beta-ketoacyl synthase activity residues Cys-180 and His-319. The tract at residues 345-369 is disordered; the sequence is QLNNFSTDGNDNDDDDDDNTSPEPL. Acidic residues predominate over residues 354 to 364; sequence NDNDDDDDDNT. The active-site For beta-ketoacyl synthase activity is His-380. The interval 672 to 705 is acyl/malonyl transferase; it reads GIYPSISVGHSFGEVSSYYLSGIISLETACKIVY. Catalysis depends on Ser-682, which acts as the For acyl/malonyl transferase activity. The tract at residues 976–1127 is N-terminal hotdog fold; the sequence is NRLEGPTTSL…ATISLEQQQP (152 aa). A PKS/mFAS DH domain is found at 976–1298; sequence NRLEGPTTSL…IKSTNPKSTK (323 aa). Residue His-1014 is the Proton acceptor; for dehydratase activity of the active site. Residues 1149-1298 are C-terminal hotdog fold; it reads DISKLDKFEL…IKSTNPKSTK (150 aa). Asp-1209 serves as the catalytic Proton donor; for dehydratase activity. The Carrier domain occupies 2568–2645; it reads SSNISLQDKI…SFLEKVNGLS (78 aa). Residue Ser-2605 is modified to O-(pantetheine 4'-phosphoryl)serine. A disordered region spans residues 2723–2747; the sequence is PSLSQSDVLKTPPIKSLNNTKNSSL. Residues 2738–2747 are compositionally biased toward polar residues; the sequence is SLNNTKNSSL. The segment at 2789–3147 is chalcone synthase; that stretch reads VLGIGISVPG…FEGCFLKNVV (359 aa). Cys-2930 is an active-site residue.

The protein in the C-terminal section; belongs to the thiolase-like superfamily. Chalcone/stilbene synthases family. As to quaternary structure, homodimer. Requires pantetheine 4'-phosphate as cofactor.

The enzyme catalyses (E)-4-coumaroyl-CoA + 3 malonyl-CoA + 3 H(+) = 2',4,4',6'-tetrahydroxychalcone + 3 CO2 + 4 CoA. It functions in the pathway secondary metabolite biosynthesis; flavonoid biosynthesis. In terms of biological role, probable polyketide synthase. Produces only acylpyrones; in vitro. In Dictyostelium discoideum (Social amoeba), this protein is Probable polyketide synthase 1 (stlA).